Here is a 329-residue protein sequence, read N- to C-terminus: MQGSVTEFLKPRLVDIEQVSSTHAKVTLEPLERGFGHTLGNALRRILLSSMPGCAVTEVEIDGVLHEYSTKEGVQEDILEILLNLKGLAVRVQGKDEVVLTLNKSGIGPVTAADITHDGDVEIVKPQHVICHLTDENASISMRIKVQRGRGYVPASARIHSEEDERPIGRLLVDACYSPVERIAYNVEAARVEQRTDLDKLVIEMETNGTIDPEEAIRRAATILAEQLEAFVDLRDVRQPEVKEEKPEFDPILLRPVDDLELTVRSANCLKAEAIHYIGDLVQRTEVELLKTPNLGKKSLTEIKDVLASRGLSLGMRLENWPPASIADE.

Residues 1–235 (MQGSVTEFLK…EQLEAFVDLR (235 aa)) form an alpha N-terminal domain (alpha-NTD) region. The alpha C-terminal domain (alpha-CTD) stretch occupies residues 249-329 (FDPILLRPVD…NWPPASIADE (81 aa)).

Belongs to the RNA polymerase alpha chain family. In terms of assembly, homodimer. The RNAP catalytic core consists of 2 alpha, 1 beta, 1 beta' and 1 omega subunit. When a sigma factor is associated with the core the holoenzyme is formed, which can initiate transcription.

It carries out the reaction RNA(n) + a ribonucleoside 5'-triphosphate = RNA(n+1) + diphosphate. Its function is as follows. DNA-dependent RNA polymerase catalyzes the transcription of DNA into RNA using the four ribonucleoside triphosphates as substrates. The polypeptide is DNA-directed RNA polymerase subunit alpha (Cronobacter sakazakii (strain ATCC BAA-894) (Enterobacter sakazakii)).